The following is a 1039-amino-acid chain: MARALCPLQALWLLEWVLLLLGPCAAPPAWALNLDPVQLTFYAGPNGSQFGFSLDFHKDSHGRVAIVVGAPRTLGPSQEETGGVFLCPWRAEGGQCPSLLFDLRDETRNVGSQTLQTFKARQGLGASVVSWSDVIVACAPWQHWNVLEKTEEAEKTPVGSCFLAQPESGRRAEYSPCRGNTLSRIYVENDFSWDKRYCEAGFSSVVTQAGELVLGAPGGYYFLGLLAQAPVADIFSSYRPGILLWHVSSQSLSFDSSNPEYFDGYWGYSVAVGEFDGDLNTTEYVVGAPTWSWTLGAVEILDSYYQRLHRLRGEQMASYFGHSVAVTDVNGDGRHDLLVGAPLYMESRADRKLAEVGRVYLFLQPRGPHALGAPSLLLTGTQLYGRFGSAIAPLGDLDRDGYNDIAVAAPYGGPSGRGQVLVFLGQSEGLRSRPSQVLDSPFPTGSAFGFSLRGAVDIDDNGYPDLIVGAYGANQVAVYRAQPVVKASVQLLVQDSLNPAVKSCVLPQTKTPVSCFNIQMCVGATGHNIPQKLSLNAELQLDRQKPRQGRRVLLLGSQQAGTTLNLDLGGKHSPICHTTMAFLRDEADFRDKLSPIVLSLNVSLPPTEAGMAPAVVLHGDTHVQEQTRIVLDCGEDDVCVPQLQLTASVTGSPLLVGADNVLELQMDAANEGEGAYEAELAVHLPQGAHYMRALSNVEGFERLICNQKKENETRVVLCELGNPMKKNAQIGIAMLVSVGNLEEAGESVSFQLQIRSKNSQNPNSKIVLLDVPVRAEAQVELRGNSFPASLVVAAEEGEREQNSLDSWGPKVEHTYELHNNGPGTVNGLHLSIHLPGQSQPSDLLYILDIQPQGGLQCFPQPPVNPLKVDWGLPIPSPSPIHPAHHKRDRRQIFLPEPEQPSRLQDPVLVSCDSAPCTVVQCDLQEMARGQRAMVTVLAFLWLPSLYQRPLDQFVLQSHAWFNVSSLPYAVPPLSLPRGEAQVWTQLLRALEERAIPIWWVLVGVLGGLLLLTILVLAMWKVGFFKRNRPPLEEDDEEGE.

Positions 1 to 31 (MARALCPLQALWLLEWVLLLLGPCAAPPAWA) are cleaved as a signal peptide. The Extracellular portion of the chain corresponds to 32 to 993 (LNLDPVQLTF…TQLLRALEER (962 aa)). FG-GAP repeat units follow at residues 35 to 96 (DPVQ…GGQC), 110 to 173 (VGSQ…RRAE), 187 to 238 (VEND…FSSY), 251 to 305 (SLSF…DSYY), 306 to 371 (QRLH…PHAL), 373 to 432 (APSL…GLRS), and 435 to 496 (SQVL…VQDS). Asn-46 is a glycosylation site (N-linked (GlcNAc...) asparagine). Cystine bridges form between Cys-87–Cys-96, Cys-138–Cys-161, and Cys-177–Cys-198. Ca(2+) is bound by residues Glu-274, Asp-276, and Asp-278. N-linked (GlcNAc...) asparagine glycosylation is present at Asn-280. Thr-281, Glu-283, Asp-328, Asn-330, Asp-332, Arg-334, Asp-336, Asp-396, Asp-398, Asp-400, Tyr-402, Asp-404, Asp-457, Asp-459, Asn-461, Tyr-463, and Asp-465 together coordinate Ca(2+). 2 cysteine pairs are disulfide-bonded: Cys-504/Cys-515 and Cys-521/Cys-576. Asn-601 carries N-linked (GlcNAc...) asparagine glycosylation. 4 cysteine pairs are disulfide-bonded: Cys-633–Cys-639, Cys-705–Cys-718, Cys-857–Cys-921, and Cys-911–Cys-916. N-linked (GlcNAc...) asparagine glycosylation is present at Asn-711. An O-linked (GalNAc...) serine; in variant S-874 glycan is attached at Ile-874. O-linked (GalNAc...) serine glycosylation occurs at Ser-878. Gln-891 is subject to Pyrrolidone carboxylic acid; in light chain form 1. A glycan (N-linked (GlcNAc...) asparagine) is linked at Asn-962. A helical transmembrane segment spans residues 994–1019 (AIPIWWVLVGVLGGLLLLTILVLAMW). Residues 1020–1039 (KVGFFKRNRPPLEEDDEEGE) lie on the Cytoplasmic side of the membrane. The short motif at 1022 to 1026 (GFFKR) is the GFFKR motif element.

Belongs to the integrin alpha chain family. Heterodimer of an alpha and a beta subunit. The alpha subunit is composed of a heavy and a light chain linked by a disulfide bond. Alpha-IIb associates with beta-3. Directly interacts with RNF181. Interacts (via C-terminus cytoplasmic tail region) with CIB1; the interaction is direct and calcium-dependent. Interacts (via C-terminus cytoplasmic tail region) with CIB2, CIB3 and CIB4; the interactions are stabilized/increased in a calcium and magnesium-dependent manner. ITGA2B:ITGB3 interacts with PPIA/CYPA; the interaction is ROS and PPIase activity-dependent and is increased in the presence of thrombin. ITGA2B:ITGB3 interacts with SELP (via C-type lectin domain); the interaction mediates cell-cell interaction and adhesion. In terms of processing, cleaved by ELANE; the cleavage promotes activation of platelet fibrinogen receptor integrin alpha-IIb/beta-3. As to expression, isoform 1 and isoform 2 are expressed in platelets and megakaryocytes, but not in reticulocytes. Not detected in Jurkat, nor in U937 cell lines. Isoform 3 is expressed in prostate adenocarcinoma, as well as in several erythroleukemia, prostate adenocarcinoma and melanoma cell lines, including PC-3, DU-145, HEL, WM983A, WM983B and WM35. Not detected in platelets, nor in normal prostate (at protein level).

It is found in the membrane. Its function is as follows. Integrin alpha-IIb/beta-3 is a receptor for fibronectin, fibrinogen, plasminogen, prothrombin, thrombospondin and vitronectin. It recognizes the sequence R-G-D in a wide array of ligands. It recognizes the sequence H-H-L-G-G-G-A-K-Q-A-G-D-V in fibrinogen gamma chain. Following activation integrin alpha-IIb/beta-3 brings about platelet/platelet interaction through binding of soluble fibrinogen. This step leads to rapid platelet aggregation which physically plugs ruptured endothelial cell surface. This chain is Integrin alpha-IIb (ITGA2B), found in Homo sapiens (Human).